Reading from the N-terminus, the 320-residue chain is Glycerol-3-phosphate dehydrogenase [NAD(P)+] (320 aa).

4 residues coordinate NADPH: serine 14, phenylalanine 15, arginine 35, and lysine 109. Sn-glycerol 3-phosphate-binding residues include lysine 109 and glycine 137. Position 141 (alanine 141) interacts with NADPH. The sn-glycerol 3-phosphate site is built by lysine 192, aspartate 248, serine 258, arginine 259, and asparagine 260. Residue lysine 192 is the Proton acceptor of the active site. Arginine 259 is a binding site for NADPH. Residues leucine 283 and glutamate 285 each contribute to the NADPH site.

This sequence belongs to the NAD-dependent glycerol-3-phosphate dehydrogenase family.

The protein resides in the cytoplasm. It catalyses the reaction sn-glycerol 3-phosphate + NAD(+) = dihydroxyacetone phosphate + NADH + H(+). It carries out the reaction sn-glycerol 3-phosphate + NADP(+) = dihydroxyacetone phosphate + NADPH + H(+). Its pathway is membrane lipid metabolism; glycerophospholipid metabolism. Functionally, catalyzes the reduction of the glycolytic intermediate dihydroxyacetone phosphate (DHAP) to sn-glycerol 3-phosphate (G3P), the key precursor for phospholipid synthesis. The polypeptide is Glycerol-3-phosphate dehydrogenase [NAD(P)+] (Rickettsia typhi (strain ATCC VR-144 / Wilmington)).